Consider the following 220-residue polypeptide: Putative NAD(P)H nitroreductase SERP2086 (220 aa).

It belongs to the nitroreductase family. Requires FMN as cofactor.

The polypeptide is Putative NAD(P)H nitroreductase SERP2086 (Staphylococcus epidermidis (strain ATCC 35984 / DSM 28319 / BCRC 17069 / CCUG 31568 / BM 3577 / RP62A)).